The chain runs to 509 residues: Metal transporter Nramp3 (509 aa).

Low complexity predominate over residues 1-12; it reads MPQLENNEPLLI. The disordered stretch occupies residues 1–25; it reads MPQLENNEPLLINEEEEEETAYDET. Residues 13–23 show a composition bias toward acidic residues; the sequence is NEEEEEETAYD. 12 helical membrane-spanning segments follow: residues 56–76, 84–104, 133–153, 165–185, 193–213, 239–259, 285–305, 327–347, 383–403, 406–426, 444–464, and 472–492; these read LWLF…PGNL, AVAG…GLLV, MVLW…EVIG, ILPL…FLFL, LEAV…WMFG, AVGV…SALV, IALF…AKGF, YGGG…AAGQ, IIPT…LDVL, WLNV…LCLV, IAWL…LEFF, and VYTG…LYLI.

This sequence belongs to the NRAMP (TC 2.A.55) family. As to expression, expressed in vascular tissues.

Its subcellular location is the vacuole membrane. Vacuolar metal transporter involved in intracellular metal homeostasis. Can transport iron (Fe), manganese (Mn) and cadmium (Cd). Regulates metal accumulation under Fe starvation. Acts redundantly with NRAMP4 to mobilize vacuolar Fe and provide sufficient Fe during seed germination. In association with NRAMP4, required for optimal growth and photosynthesis under Mn deficiency. Exports Mn from vacuoles in leaf mesophyll cells, making Mn available for functional photosystem II in chloroplasts. Involved in basal resistance to the bacterial pathogen E.chrysanthemi. This Arabidopsis thaliana (Mouse-ear cress) protein is Metal transporter Nramp3 (NRAMP3).